Here is a 294-residue protein sequence, read N- to C-terminus: Large ribosomal subunit protein uL18A (294 aa).

S10 carries the phosphoserine modification. Position 12 is a phosphotyrosine (Y12). The residue at position 81 (S81) is a Phosphoserine.

Belongs to the universal ribosomal protein uL18 family. Component of the large ribosomal subunit (LSU). Mature yeast ribosomes consist of a small (40S) and a large (60S) subunit. The 40S small subunit contains 1 molecule of ribosomal RNA (18S rRNA) and 33 different proteins (encoded by 57 genes). The large 60S subunit contains 3 rRNA molecules (25S, 5.8S and 5S rRNA) and 46 different proteins (encoded by 81 genes). Component of a hexameric 5S RNP precursor complex, composed of 5S RNA, rrs1, rpf2, rpl5a/rpl5b, rpl11a/rpl11b and syo1; this complex acts as a precursor for ribosome assembly. rpl5a/rpl5b/uL18 forms a heterotrimeric complex with syo1 and rpl11a/rpl11b/uL5. Interaction of this complex with KAP104 allows the nuclear import of the heterotrimer.

The protein localises to the cytoplasm. It is found in the nucleus. Component of the ribosome, a large ribonucleoprotein complex responsible for the synthesis of proteins in the cell. The small ribosomal subunit (SSU) binds messenger RNAs (mRNAs) and translates the encoded message by selecting cognate aminoacyl-transfer RNA (tRNA) molecules. The large subunit (LSU) contains the ribosomal catalytic site termed the peptidyl transferase center (PTC), which catalyzes the formation of peptide bonds, thereby polymerizing the amino acids delivered by tRNAs into a polypeptide chain. The nascent polypeptides leave the ribosome through a tunnel in the LSU and interact with protein factors that function in enzymatic processing, targeting, and the membrane insertion of nascent chains at the exit of the ribosomal tunnel. This chain is Large ribosomal subunit protein uL18A (rpl501), found in Schizosaccharomyces pombe (strain 972 / ATCC 24843) (Fission yeast).